A 209-amino-acid chain; its full sequence is PRA1 family protein E (209 aa).

A disordered region spans residues 1-20 (MNQKPPPYGYGGAGGGGVGP). A compositionally biased stretch (gly residues) spans 9 to 19 (GYGGAGGGGVG). Helical transmembrane passes span 90 to 110 (IVFLGLIYHPMSMIAFIVVFI), 132 to 152 (VDDKIVLVLLSLVTVLALVYT), and 155 to 175 (GENVLVSLIIGLLIVGAHGAF).

This sequence belongs to the PRA1 family. In terms of assembly, interacts with PRA1B1, PRA1B2, PRA1B3, PRA1B4, PRA1B5 and PRA1B6. Expressed in hypocotyls, roots, lateral roots, columella cells, leaves and shoot apex.

It localises to the endosome membrane. Functionally, may be involved in both secretory and endocytic intracellular trafficking in the endosomal/prevacuolar compartments. The sequence is that of PRA1 family protein E (PRA1E) from Arabidopsis thaliana (Mouse-ear cress).